The sequence spans 26 residues: U1-poneritoxin-Ni1b (26 aa).

The protein belongs to the non-disulfide-bridged peptide (NDBP) superfamily. Medium-length antimicrobial peptide (group 3) family. Ponericin-W subfamily. In terms of tissue distribution, expressed by the venom gland.

The protein localises to the secreted. The protein resides in the target cell membrane. In terms of biological role, has a broad spectrum of activity against both Gram-positive and Gram-negative bacteria and S.cerevisiae. Has insecticidal and hemolytic activities. May act by disrupting the integrity of the bacterial cell membrane. This Neoponera inversa (Ant) protein is U1-poneritoxin-Ni1b.